Here is a 310-residue protein sequence, read N- to C-terminus: Putative methyltransferase mtx subunit H (310 aa).

This sequence belongs to the MtrH family. As to quaternary structure, may be part of a complex composed of 3 subunits; MtxA, MtxH and MtxX.

This chain is Putative methyltransferase mtx subunit H (mtxH), found in Methanosarcina acetivorans (strain ATCC 35395 / DSM 2834 / JCM 12185 / C2A).